A 99-amino-acid chain; its full sequence is Acylphosphatase (99 aa).

Positions 10 to 99 (RLTAFVHGHV…PRGVEGFTER (90 aa)) constitute an Acylphosphatase-like domain. Active-site residues include Arg25 and Asn43.

Belongs to the acylphosphatase family.

It catalyses the reaction an acyl phosphate + H2O = a carboxylate + phosphate + H(+). This is Acylphosphatase (acyP) from Corynebacterium efficiens (strain DSM 44549 / YS-314 / AJ 12310 / JCM 11189 / NBRC 100395).